The chain runs to 1410 residues: DNA-directed RNA polymerase subunit beta' (1410 aa).

Zn(2+) is bound by residues C70, C72, C85, and C88. The Mg(2+) site is built by D460, D462, and D464. The Zn(2+) site is built by C814, C888, C895, and C898.

The protein belongs to the RNA polymerase beta' chain family. As to quaternary structure, the RNAP catalytic core consists of 2 alpha, 1 beta, 1 beta' and 1 omega subunit. When a sigma factor is associated with the core the holoenzyme is formed, which can initiate transcription. Requires Mg(2+) as cofactor. Zn(2+) is required as a cofactor.

The enzyme catalyses RNA(n) + a ribonucleoside 5'-triphosphate = RNA(n+1) + diphosphate. Its function is as follows. DNA-dependent RNA polymerase catalyzes the transcription of DNA into RNA using the four ribonucleoside triphosphates as substrates. This is DNA-directed RNA polymerase subunit beta' from Shewanella denitrificans (strain OS217 / ATCC BAA-1090 / DSM 15013).